The primary structure comprises 492 residues: N-succinylglutamate 5-semialdehyde dehydrogenase (492 aa).

Position 220–225 (220–225) interacts with NAD(+); the sequence is GSAGTG. Catalysis depends on residues glutamate 243 and cysteine 277.

The protein belongs to the aldehyde dehydrogenase family. AstD subfamily.

The enzyme catalyses N-succinyl-L-glutamate 5-semialdehyde + NAD(+) + H2O = N-succinyl-L-glutamate + NADH + 2 H(+). It functions in the pathway amino-acid degradation; L-arginine degradation via AST pathway; L-glutamate and succinate from L-arginine: step 4/5. Its function is as follows. Catalyzes the NAD-dependent reduction of succinylglutamate semialdehyde into succinylglutamate. The chain is N-succinylglutamate 5-semialdehyde dehydrogenase from Cronobacter sakazakii (strain ATCC BAA-894) (Enterobacter sakazakii).